The primary structure comprises 96 residues: Myosuppressin (96 aa).

A signal peptide spans 1–24; that stretch reads MALGNGYYCAVVCVVLACASVVLC. The propeptide occupies 25 to 80; sequence APAQLCAGAADDDPRAARFCQALNTFLELYAEAAGEQVPEYQALVRDYPQLLDTGM. At Gln83 the chain carries Pyrrolidone carboxylic acid; partial. Phe92 carries the phenylalanine amide modification. A propeptide is located at residue Arg96.

This sequence belongs to the myosuppressin family. Expressed in corpora cardiaca (CC), corpora allata (CA), antennal lobe (AL) and gnathal ganglion (GNG) (at protein level). In its non-pyroglutamate form, expression in GNG detected in all animals, in AL, CC and in CA in most animals (at protein level). In its pyroglutamate form, expression in CC, CA and GNG detected in all animals, in AL in some animals (at protein level).

The protein localises to the secreted. Myoinhibiting neuropeptide. This is Myosuppressin from Agrotis ipsilon (Black cutworm moth).